A 73-amino-acid chain; its full sequence is uncharacterized protein (73 aa).

The first 23 residues, 1–23 (MLHLIKMVSKIVLLITLVFIVSA), serve as a signal peptide directing secretion.

This is an uncharacterized protein from Acheta domesticus (House cricket).